The sequence spans 593 residues: Vicilin Jug r 2.0101 (593 aa).

Basic and acidic residues-rich tracts occupy residues 46–76 (LEEDQRSQEERERRRGRDVDDQNPRDPEQRY) and 97–118 (RRCEQRRQQEERERQRGRDRQD). Residues 46 to 123 (LEEDQRSQEE…RDRQDPQQQY (78 aa)) are disordered. IgE-binding stretches follow at residues 49–58 (DQRSQEERER), 76–85 (YEQCQQQCER), and 101–110 (QRRQQEERER). An igE-binding. Involved in cross-reactivity with peanut allergen Ara h 2; able to inhibit binding of IgE from a peanut-allergic patient to Ara h 2 region spans residues 140–149 (QRQCQQRCER). Residues 150–178 (QYKEQQGRERGPEASPRRESRGREEEQQR) show a composition bias toward basic and acidic residues. Residues 150-184 (QYKEQQGRERGPEASPRRESRGREEEQQRHNPYYF) are disordered. T-cell epitope; recognized by the HLA-DRB1-restricted CD4(+) T-cells stretches follow at residues 175 to 193 (EQQRHNPYYFHSQSIRSRH) and 206 to 225 (FTERTELLRGIENYRVVILD). Tyr-182 is a Cu cation binding site. 2 Cupin type-1 domains span residues 187–341 (QSIR…DRLE) and 386–556 (ISLK…EEIE). Asn-229 is a glycosylation site (N-linked (GlcNAc...) asparagine). 6 T-cell epitope; recognized by the HLA-DRB1-restricted CD4(+) T-cells regions span residues 246–265 (TRGRATLTLVSQETRESFNL), 302–321 (PGQFREYYAAGAKSPDQSYL), 318–337 (QSYLRVFSNDILVAALNTPR), 382–401 (SGGPISLKSESPSYSNQFGQ), 414–433 (QEMDVLVNYAEIKRGAMMVP), and 438–457 (KATVVVYVVEGTGRYEMACP). Positions 456 and 458 each coordinate Cu cation. Residues 463 to 470 (SYEGQGRR) form an igE-binding region. Positions 478–497 (TGRFQKVTARLARGDIFVIP) are T-cell epitope; recognized by the HLA-DRB1-restricted CD4(+) T-cells. His-500 contributes to the Cu cation binding site. The stretch at 529-556 (LAGQNNIINQLEREAKELSFNMPREEIE) forms a coiled coil. Residues 541 to 555 (REAKELSFNMPREEI) form an igE-binding region. T-cell epitope; recognized by the HLA-DRB1-restricted CD4(+) T-cells stretches follow at residues 542-561 (EAKELSFNMPREEIEEIFES) and 558-577 (IFESQMESYFVPTERQSRRG).

This sequence belongs to the 7S seed storage protein family. Post-translationally, proteolytically cleaved. In terms of tissue distribution, expressed in seed (at protein level).

Seed storage protein. The sequence is that of Vicilin Jug r 2.0101 from Juglans regia (English walnut).